The sequence spans 417 residues: UDP-N-acetylglucosamine 1-carboxyvinyltransferase (417 aa).

Residue 22–23 (KN) coordinates phosphoenolpyruvate. Arg-92 serves as a coordination point for UDP-N-acetyl-alpha-D-glucosamine. Residue Cys-116 is the Proton donor of the active site. Cys-116 is modified (2-(S-cysteinyl)pyruvic acid O-phosphothioketal). Positions 304 and 326 each coordinate UDP-N-acetyl-alpha-D-glucosamine.

Belongs to the EPSP synthase family. MurA subfamily.

Its subcellular location is the cytoplasm. It carries out the reaction phosphoenolpyruvate + UDP-N-acetyl-alpha-D-glucosamine = UDP-N-acetyl-3-O-(1-carboxyvinyl)-alpha-D-glucosamine + phosphate. Its pathway is cell wall biogenesis; peptidoglycan biosynthesis. Cell wall formation. Adds enolpyruvyl to UDP-N-acetylglucosamine. This chain is UDP-N-acetylglucosamine 1-carboxyvinyltransferase, found in Desulfosudis oleivorans (strain DSM 6200 / JCM 39069 / Hxd3) (Desulfococcus oleovorans).